A 180-amino-acid chain; its full sequence is ATP synthase subunit delta (180 aa).

It belongs to the ATPase delta chain family. In terms of assembly, F-type ATPases have 2 components, F(1) - the catalytic core - and F(0) - the membrane proton channel. F(1) has five subunits: alpha(3), beta(3), gamma(1), delta(1), epsilon(1). F(0) has three main subunits: a(1), b(2) and c(10-14). The alpha and beta chains form an alternating ring which encloses part of the gamma chain. F(1) is attached to F(0) by a central stalk formed by the gamma and epsilon chains, while a peripheral stalk is formed by the delta and b chains.

The protein localises to the cell inner membrane. In terms of biological role, f(1)F(0) ATP synthase produces ATP from ADP in the presence of a proton or sodium gradient. F-type ATPases consist of two structural domains, F(1) containing the extramembraneous catalytic core and F(0) containing the membrane proton channel, linked together by a central stalk and a peripheral stalk. During catalysis, ATP synthesis in the catalytic domain of F(1) is coupled via a rotary mechanism of the central stalk subunits to proton translocation. This protein is part of the stalk that links CF(0) to CF(1). It either transmits conformational changes from CF(0) to CF(1) or is implicated in proton conduction. This Parabacteroides distasonis (strain ATCC 8503 / DSM 20701 / CIP 104284 / JCM 5825 / NCTC 11152) protein is ATP synthase subunit delta.